The sequence spans 401 residues: O-antigen ligase (401 aa).

Residues 1–20 (MFAATRLSRLRHDTSRILSH) lie on the Cytoplasmic side of the membrane. A helical transmembrane segment spans residues 21-37 (WILPLGWLALLTGMFWV). Residues 38-42 (GDRSD) are Periplasmic-facing. The helical transmembrane segment at 43–61 (YHRLFYILLAAPTLLYVIL) threads the bilayer. At 62–72 (QPRLLRPLTGS) the chain is on the cytoplasmic side. The chain crosses the membrane as a helical span at residues 73 to 92 (PLFIAFLAFSSYMMLSLSWS). The Periplasmic segment spans residues 93-103 (TPENSTGSLLK). A helical transmembrane segment spans residues 104 to 122 (RPLYIALLFFCAAILALEA). The Cytoplasmic segment spans residues 123–129 (PLRLKTA). Residues 130 to 150 (TWLAALGAVISAAATLLRYYW) traverse the membrane as a helical segment. At 151–161 (DANPLRLTGYG) the chain is on the periplasmic side. The helical transmembrane segment at 162-183 (ALYNPLLSAHVYGAFTALWLAY) threads the bilayer. Residues 184–189 (WMQSRP) are Cytoplasmic-facing. The chain crosses the membrane as a helical span at residues 190-208 (ILAPLPLISLALLGGLLIA). Topologically, residues 209–212 (TGSR) are periplasmic. A helical membrane pass occupies residues 213 to 229 (TPLVGLTAALMWLVLAG). Residues 230–234 (DRKKA) are Cytoplasmic-facing. Residues 235 to 252 (LIALALALAGALLGYILY) traverse the membrane as a helical segment. The Periplasmic portion of the chain corresponds to 253 to 306 (PEVITQRGASFRPEIWADALRQISEHPWLGHGYDHPMRIVLSNGMLLADPHNIE). Positions 258–319 (QRGASFRPEI…LFAGGIIGLL (62 aa)) are WZY-C. Residues 307-331 (LGVLFAGGIIGLLLWVAIYALAFGF) form a helical membrane-spanning segment. Residues 332 to 339 (SWKNRKSP) are Cytoplasmic-facing. A helical membrane pass occupies residues 340–357 (AVLLASTWLVFGLAAGLT). Residues 358 to 368 (EGNAFLPRPKE) lie on the Periplasmic side of the membrane. Residues 369 to 385 (HWFLIWIPMALLYALWI) traverse the membrane as a helical segment. Residues 386–401 (QQRFAASRRGEDIAAP) are Cytoplasmic-facing.

It belongs to the O-antigen ligase family. As to quaternary structure, homodimer.

The protein resides in the cell inner membrane. It carries out the reaction a lipid-linked O antigen + a lipid A-core oligosaccharide = a lipopolysaccharide + a polyisoprenyl diphosphate.. It participates in bacterial outer membrane biogenesis; lipopolysaccharide biosynthesis. With respect to regulation, activity does not require ATP and magnesium ions. In terms of biological role, transferase involved in the biosynthesis of the lipopolysaccharide (LPS). Catalyzes the transfer of a polymerized O-antigen molecule from its polyprenyl diphosphate membrane anchor to a terminal sugar of the lipid A-core oligosaccharide, finalizing the biosynthesis of the lipopolysaccharide. Required for the attachment of both A-band and B-band O-antigens, two forms of O-antigen produced by P.aeruginosa, onto the lipid A-core receptors. Important for cell wall integrity and motility of the bacteria. This is O-antigen ligase from Pseudomonas aeruginosa (strain ATCC 15692 / DSM 22644 / CIP 104116 / JCM 14847 / LMG 12228 / 1C / PRS 101 / PAO1).